Reading from the N-terminus, the 99-residue chain is DNA-directed RNA polymerase subunit Rpo11 (99 aa).

It belongs to the archaeal Rpo11/eukaryotic RPB11/RPC19 RNA polymerase subunit family. Part of the RNA polymerase complex. Forms an Rpo3-Rpo10-Rpo11-Rpo12 complex upon coexpression.

The protein localises to the cytoplasm. It carries out the reaction RNA(n) + a ribonucleoside 5'-triphosphate = RNA(n+1) + diphosphate. Functionally, DNA-dependent RNA polymerase (RNAP) catalyzes the transcription of DNA into RNA using the four ribonucleoside triphosphates as substrates. The sequence is that of DNA-directed RNA polymerase subunit Rpo11 from Methanocaldococcus jannaschii (strain ATCC 43067 / DSM 2661 / JAL-1 / JCM 10045 / NBRC 100440) (Methanococcus jannaschii).